Consider the following 342-residue polypeptide: Delta-aminolevulinic acid dehydratase (342 aa).

Zn(2+) is bound by residues cysteine 133, cysteine 135, and cysteine 143. Lysine 210 (schiff-base intermediate with substrate) is an active-site residue. Residues arginine 220 and arginine 232 each contribute to the 5-aminolevulinate site. A Phosphoserine modification is found at serine 254. Lysine 263 acts as the Schiff-base intermediate with substrate in catalysis. 2 residues coordinate 5-aminolevulinate: serine 290 and tyrosine 329.

Belongs to the ALAD family. In terms of assembly, homooctamer. The cofactor is Zn(2+).

The catalysed reaction is 2 5-aminolevulinate = porphobilinogen + 2 H2O + H(+). Its pathway is porphyrin-containing compound metabolism; protoporphyrin-IX biosynthesis; coproporphyrinogen-III from 5-aminolevulinate: step 1/4. Inhibited by divalent lead ions. Its function is as follows. Catalyzes an early step in the biosynthesis of tetrapyrroles. Binds two molecules of 5-aminolevulinate per subunit, each at a distinct site, and catalyzes their condensation to form porphobilinogen. The sequence is that of Delta-aminolevulinic acid dehydratase (HEM2) from Saccharomyces cerevisiae (strain ATCC 204508 / S288c) (Baker's yeast).